The primary structure comprises 192 residues: Xanthine phosphoribosyltransferase (192 aa).

Residues Leu20 and Thr26 each coordinate xanthine. 127 to 131 is a binding site for 5-phospho-alpha-D-ribose 1-diphosphate; sequence ANGQA. Lys155 serves as a coordination point for xanthine.

It belongs to the purine/pyrimidine phosphoribosyltransferase family. Xpt subfamily. In terms of assembly, homodimer.

The protein localises to the cytoplasm. It carries out the reaction XMP + diphosphate = xanthine + 5-phospho-alpha-D-ribose 1-diphosphate. It functions in the pathway purine metabolism; XMP biosynthesis via salvage pathway; XMP from xanthine: step 1/1. Converts the preformed base xanthine, a product of nucleic acid breakdown, to xanthosine 5'-monophosphate (XMP), so it can be reused for RNA or DNA synthesis. This Streptococcus thermophilus protein is Xanthine phosphoribosyltransferase.